A 28-amino-acid chain; its full sequence is Ranatuerin-2B (28 aa).

Residues cysteine 23 and cysteine 28 are joined by a disulfide bond.

As to expression, expressed by the skin glands.

Its subcellular location is the secreted. Functionally, antibacterial activity against Gram-positive bacterium S.aureus and Gram-negative bacterium E.coli. Has activity against C.albicans. This Lithobates berlandieri (Rio Grande leopard frog) protein is Ranatuerin-2B.